Consider the following 137-residue polypeptide: Small ribosomal subunit protein uS12 (137 aa).

Disordered stretches follow at residues 1-21 (MPTI…KSDS) and 34-57 (VHTK…TPKK). Residue aspartate 102 is modified to 3-methylthioaspartic acid.

Belongs to the universal ribosomal protein uS12 family. Part of the 30S ribosomal subunit. Contacts proteins S8 and S17. May interact with IF1 in the 30S initiation complex.

With S4 and S5 plays an important role in translational accuracy. Functionally, interacts with and stabilizes bases of the 16S rRNA that are involved in tRNA selection in the A site and with the mRNA backbone. Located at the interface of the 30S and 50S subunits, it traverses the body of the 30S subunit contacting proteins on the other side and probably holding the rRNA structure together. The combined cluster of proteins S8, S12 and S17 appears to hold together the shoulder and platform of the 30S subunit. The sequence is that of Small ribosomal subunit protein uS12 from Streptococcus uberis (strain ATCC BAA-854 / 0140J).